The following is a 750-amino-acid chain: GTP pyrophosphokinase rsh (750 aa).

The HD domain occupies 45–144 (YFSHPLEVAA…VKLADRLHNM (100 aa)). The region spanning 390–451 (DQVFCFTPKG…KNGDEVDIIR (62 aa)) is the TGS domain. The tract at residues 587-613 (AAKVDPAATTPKPGKRALPIRGTNPDL) is disordered. The ACT domain occupies 676–750 (RISVSAINSP…SVSSAKRVNG (75 aa)).

It belongs to the RelA/SpoT family.

It carries out the reaction GTP + ATP = guanosine 3'-diphosphate 5'-triphosphate + AMP. Functionally, functions as a (p)ppGpp synthase. In eubacteria ppGpp (guanosine 3'-diphosphate 5'-diphosphate) is a mediator of the stringent response that coordinates a variety of cellular activities in response to changes in nutritional abundance. Plays a role in adaptation of Brucella to its intracellular host environment. This is GTP pyrophosphokinase rsh (rsh) from Brucella abortus (strain 2308).